We begin with the raw amino-acid sequence, 281 residues long: 3'-5' exonuclease Snipper (281 aa).

Positions 19–52 are disordered; sequence DGARPDPNNDPEESFNEDEVTEANSVPAKSKKSR. A compositionally biased stretch (acidic residues) spans 27–39; sequence NDPEESFNEDEVT. The Exonuclease domain maps to 64–262; sequence YVIAVDFEAT…MCKMVRDGAL (199 aa). Asp-69 and Glu-71 together coordinate Mg(2+). Glu-71 acts as the Proton acceptor in catalysis. 2 residues coordinate AMP: Glu-71 and Ala-72. Asp-183 is a Mg(2+) binding site. His-240 acts as the Proton acceptor in catalysis. Position 240 (His-240) interacts with AMP. Residue Asp-245 participates in Mg(2+) binding.

This sequence belongs to the ERI2 family. It depends on Mg(2+) as a cofactor.

Its subcellular location is the cytoplasm. It localises to the nucleus. The protein resides in the nucleolus. Functionally, a broad-specificity exonuclease, capable of degrading both structure-specific DNA and RNA targets without sequence specificity in vitro. Requires two to five unpaired nucleotides in the 3' region for efficient binding and nuclease activity. Binds with higher affinity to RNA and DNA stem-loop substrates compared to single-stranded substrate. Binds to the 3'-end of histone mRNAs and degrades them, suggesting that it might play a role in histone mRNA decay after replication. Can readily cleave the histone stem-loop RNA beyond the -12 (UUU) position in the loop to produce -14 and then -16 oligonucleotide fragments for both the stem-loop and the reverse stem-loop. Cleaves both the single-stranded 3' flank as well as the double-stranded stem portion of histone stem-loop RNA. Might affect histone mRNA 3' processing thereby regulating histone protein expression. Has an important role in development and tissue formation. Might have a role in 5.8S rRNA precursor processing. In Drosophila melanogaster (Fruit fly), this protein is 3'-5' exonuclease Snipper.